Consider the following 236-residue polypeptide: L-aspartate dehydrogenase (236 aa).

Residues 10 to 11 (AI), aspartate 31, 58 to 59 (AS), tyrosine 66, 80 to 81 (LS), alanine 111, and asparagine 162 contribute to the NAD(+) site. Residue histidine 189 is part of the active site. Residue 212–215 (NPKT) coordinates NAD(+).

Belongs to the L-aspartate dehydrogenase family. In terms of assembly, homodimer.

It catalyses the reaction L-aspartate + NADP(+) + H2O = oxaloacetate + NH4(+) + NADPH + H(+). The enzyme catalyses L-aspartate + NAD(+) + H2O = oxaloacetate + NH4(+) + NADH + H(+). It participates in cofactor biosynthesis; NAD(+) biosynthesis; iminoaspartate from L-aspartate (dehydrogenase route): step 1/1. Its function is as follows. Specifically catalyzes the NAD or NADP-dependent dehydrogenation of L-aspartate to iminoaspartate. The protein is L-aspartate dehydrogenase of Archaeoglobus fulgidus (strain ATCC 49558 / DSM 4304 / JCM 9628 / NBRC 100126 / VC-16).